We begin with the raw amino-acid sequence, 337 residues long: Centromere protein N (337 aa).

Phosphoserine is present on residues serine 226 and serine 233.

This sequence belongs to the CENP-N/CHL4 family. As to quaternary structure, component of the CENPA-NAC complex, at least composed of CENPA, CENPC, CENPH, CENPM, CENPN, CENPT and CENPU. The CENPA-NAC complex interacts with the CENPA-CAD complex, composed of CENPI, CENPK, CENPL, CENPO, CENPP, CENPQ, CENPR and CENPS. Interacts directly with CENPA. Identified in a centromere complex containing histones H2A, H2B and H4, and at least CENPA, CENPB, CENPC, CENPT, CENPN, HJURP, SUPT16H, SSRP1 and RSF1.

It localises to the nucleus. The protein localises to the chromosome. Its subcellular location is the centromere. It is found in the kinetochore. Functionally, component of the CENPA-NAC (nucleosome-associated) complex, a complex that plays a central role in assembly of kinetochore proteins, mitotic progression and chromosome segregation. The CENPA-NAC complex recruits the CENPA-CAD (nucleosome distal) complex and may be involved in incorporation of newly synthesized CENPA into centromeres. CENPN is the first protein to bind specifically to CENPA nucleosomes and the direct binding of CENPA nucleosomes by CENPN is required for centromere assembly. Required for chromosome congression and efficiently align the chromosomes on a metaphase plate. This is Centromere protein N (Cenpn) from Mus musculus (Mouse).